A 417-amino-acid chain; its full sequence is Carboxypeptidase A2 (417 aa).

Positions 1-16 (MRLTPLLVALFGYIYC) are cleaved as a signal peptide. Residues 17-112 (QETFVGDQVL…EMLFNQQRER (96 aa)) constitute a propeptide, activation peptide. In terms of domain architecture, Peptidase M14 spans 120-412 (AYHTLEEIYQ…LGLKTIMEHV (293 aa)). Zn(2+)-binding residues include His-177 and Glu-180. Substrate is bound by residues 177–180 (HARE), Arg-235, and 252–253 (NR). Cys-246 and Cys-269 are oxidised to a cystine. Zn(2+) is bound at residue His-304. 305-306 (SY) contributes to the substrate binding site. The cysteines at positions 318 and 352 are disulfide-linked. Residue Tyr-356 coordinates substrate. The Proton donor/acceptor role is filled by Glu-378.

It belongs to the peptidase M14 family. Zn(2+) is required as a cofactor.

The protein localises to the secreted. The enzyme catalyses Similar to that of carboxypeptidase A (EC 3.4.17.1), but with a preference for bulkier C-terminal residues.. Carboxypeptidase that catalyzes the release of a C-terminal amino acid, with a preference for large aromatic C-terminal residues. In Mus musculus (Mouse), this protein is Carboxypeptidase A2 (Cpa2).